Reading from the N-terminus, the 611-residue chain is Elongation factor 4 (611 aa).

Positions 11–193 (EKIRNFSIIA…QVVEYVPAPS (183 aa)) constitute a tr-type G domain. Residues 23 to 28 (DHGKST) and 140 to 143 (NKID) contribute to the GTP site.

Belongs to the TRAFAC class translation factor GTPase superfamily. Classic translation factor GTPase family. LepA subfamily.

It localises to the cell membrane. It catalyses the reaction GTP + H2O = GDP + phosphate + H(+). Functionally, required for accurate and efficient protein synthesis under certain stress conditions. May act as a fidelity factor of the translation reaction, by catalyzing a one-codon backward translocation of tRNAs on improperly translocated ribosomes. Back-translocation proceeds from a post-translocation (POST) complex to a pre-translocation (PRE) complex, thus giving elongation factor G a second chance to translocate the tRNAs correctly. Binds to ribosomes in a GTP-dependent manner. This chain is Elongation factor 4, found in Enterococcus faecalis (strain ATCC 700802 / V583).